Here is a 967-residue protein sequence, read N- to C-terminus: Vitamin B12-dependent ribonucleotide reductase (967 aa).

Residues 1-23 form a disordered region; that stretch reads MTETASGPARSSRAKGTKAGKGL. Residues Ser143, 159-160, Gly188, 364-368, and 554-558 contribute to the substrate site; these read AC, NPCSE, and PTGTI. Cys160 and Cys377 are disulfide-bonded. Catalysis depends on Asn364, which acts as the Proton acceptor. The active-site Cysteine radical intermediate is the Cys366. Catalysis depends on Glu368, which acts as the Proton acceptor.

It belongs to the ribonucleoside diphosphate reductase class-2 family. Adenosylcob(III)alamin serves as cofactor.

It carries out the reaction a 2'-deoxyribonucleoside 5'-diphosphate + [thioredoxin]-disulfide + H2O = a ribonucleoside 5'-diphosphate + [thioredoxin]-dithiol. Functionally, catalyzes the reduction of ribonucleotides to deoxyribonucleotides. May function to provide a pool of deoxyribonucleotide precursors for DNA repair during oxygen limitation and/or for immediate growth after restoration of oxygen. The sequence is that of Vitamin B12-dependent ribonucleotide reductase (nrdJ) from Streptomyces coelicolor (strain ATCC BAA-471 / A3(2) / M145).